A 345-amino-acid chain; its full sequence is Beta-2-glycoprotein 1 (345 aa).

A signal peptide spans 1–19; it reads MISLGLILFSSVLCHVATA. 4 Sushi domains span residues 21–81, 82–139, 140–202, and 203–262; these read RTCP…RCIP, RVCP…VCTR, VTCP…ECRE, and VKCP…SCKA. Disulfide bonds link Cys-23–Cys-66, Cys-51–Cys-79, Cys-84–Cys-124, Cys-110–Cys-137, Cys-142–Cys-188, Cys-174–Cys-200, Cys-205–Cys-248, Cys-234–Cys-260, Cys-264–Cys-315, Cys-300–Cys-325, and Cys-307–Cys-345. Thr-33 is a glycosylation site (O-linked (GalNAc...) threonine). N-linked (GlcNAc...) asparagine glycans are attached at residues Asn-117, Asn-162, Asn-183, and Asn-193. N-linked (GlcNAc...) asparagine glycosylation occurs at Asn-253. The segment at 263–345 is sushi-like; that stretch reads SCKLSVKKAT…KTDASDVKPC (83 aa).

As to expression, expressed by the liver and secreted in plasma.

The protein localises to the secreted. Functionally, binds to various kinds of negatively charged substances such as heparin, phospholipids, and dextran sulfate. May prevent activation of the intrinsic blood coagulation cascade by binding to phospholipids on the surface of damaged cells. This Canis lupus familiaris (Dog) protein is Beta-2-glycoprotein 1 (APOH).